Consider the following 293-residue polypeptide: Undecaprenyl-diphosphatase (293 aa).

A run of 5 helical transmembrane segments spans residues 107–127 (WMII…KDLI), 134–154 (MWIT…AEKV), 207–227 (FSFL…LPDA), 243–263 (IGTL…MKFV), and 268–288 (FSWF…LLWL).

It belongs to the UppP family.

It localises to the cell membrane. It carries out the reaction di-trans,octa-cis-undecaprenyl diphosphate + H2O = di-trans,octa-cis-undecaprenyl phosphate + phosphate + H(+). In terms of biological role, catalyzes the dephosphorylation of undecaprenyl diphosphate (UPP). Confers resistance to bacitracin. This is Undecaprenyl-diphosphatase from Corynebacterium efficiens (strain DSM 44549 / YS-314 / AJ 12310 / JCM 11189 / NBRC 100395).